We begin with the raw amino-acid sequence, 352 residues long: Spermidine/putrescine import ATP-binding protein PotA (352 aa).

Positions 7-237 (IELKNVSKKY…PKNKFVANFI (231 aa)) constitute an ABC transporter domain. Residue 39-46 (GPSGCGKT) coordinates ATP.

It belongs to the ABC transporter superfamily. Spermidine/putrescine importer (TC 3.A.1.11.1) family. As to quaternary structure, the complex is composed of two ATP-binding proteins (PotA), two transmembrane proteins (PotB and PotC) and a solute-binding protein (PotD).

It is found in the cell membrane. The enzyme catalyses ATP + H2O + polyamine-[polyamine-binding protein]Side 1 = ADP + phosphate + polyamineSide 2 + [polyamine-binding protein]Side 1.. Functionally, part of the ABC transporter complex PotABCD involved in spermidine/putrescine import. Responsible for energy coupling to the transport system. The sequence is that of Spermidine/putrescine import ATP-binding protein PotA from Clostridium acetobutylicum (strain ATCC 824 / DSM 792 / JCM 1419 / IAM 19013 / LMG 5710 / NBRC 13948 / NRRL B-527 / VKM B-1787 / 2291 / W).